A 197-amino-acid polypeptide reads, in one-letter code: Holliday junction branch migration complex subunit RuvA (197 aa).

The segment at 1-63 (MFDYIKGQLT…EDAHLLFGFH (63 aa)) is domain I. The interval 64-142 (TENEKDVFLK…TIPEGGQAQQ (79 aa)) is domain II. The segment at 142–146 (QMPKA) is flexible linker. Residues 147 to 197 (KGNQQLDEAIEALLALGYKATELKKIRAFFEGTDDTAEQYIKSALKMLMKG) form a domain III region.

Belongs to the RuvA family. In terms of assembly, homotetramer. Forms an RuvA(8)-RuvB(12)-Holliday junction (HJ) complex. HJ DNA is sandwiched between 2 RuvA tetramers; dsDNA enters through RuvA and exits via RuvB. An RuvB hexamer assembles on each DNA strand where it exits the tetramer. Each RuvB hexamer is contacted by two RuvA subunits (via domain III) on 2 adjacent RuvB subunits; this complex drives branch migration. In the full resolvosome a probable DNA-RuvA(4)-RuvB(12)-RuvC(2) complex forms which resolves the HJ.

Its subcellular location is the cytoplasm. The RuvA-RuvB-RuvC complex processes Holliday junction (HJ) DNA during genetic recombination and DNA repair, while the RuvA-RuvB complex plays an important role in the rescue of blocked DNA replication forks via replication fork reversal (RFR). RuvA specifically binds to HJ cruciform DNA, conferring on it an open structure. The RuvB hexamer acts as an ATP-dependent pump, pulling dsDNA into and through the RuvAB complex. HJ branch migration allows RuvC to scan DNA until it finds its consensus sequence, where it cleaves and resolves the cruciform DNA. This is Holliday junction branch migration complex subunit RuvA from Streptococcus uberis (strain ATCC BAA-854 / 0140J).